Here is a 319-residue protein sequence, read N- to C-terminus: MLCASQASTTTLCSTMDQTSQPSSSSSATIRLGGRAIDRHNPIIRDGRRLTPPPSPNLNPSSSSSSTYHTPLMTRLGLESSEQKRLAKRKSKKGDSDVGKSPVSCFSSDTPQGSSRYLLSNPVFFDGFVDSDPIPIPIDEPEITKADDLNNFHEDRLIINASKYLSTSASFLEKKQPDFFEGFLDYEPVLSPDNPFSEPTKASPTASLSSLEDKDVSSPDFKFSPPPPPPPSPPQSSPPSPPEKNSSSDQVVVLRVSLHCKGCAGKVKKHLSKLKGVTSYNIDFAAKKVTVTGDVTPLTVLASISKVKNAQFWPEIIQK.

Residues 1 to 13 (MLCASQASTTTLC) show a composition bias toward polar residues. Disordered stretches follow at residues 1 to 113 (MLCA…TPQG) and 191 to 248 (SPDN…NSSS). Residues 14–27 (STMDQTSQPSSSSS) show a composition bias toward low complexity. Positions 36 to 49 (AIDRHNPIIRDGRR) are enriched in basic and acidic residues. Over residues 58–67 (LNPSSSSSST) the composition is skewed to low complexity. Composition is skewed to polar residues over residues 104 to 113 (SCFSSDTPQG) and 200 to 210 (TKASPTASLSS). The span at 224–242 (SPPPPPPPSPPQSSPPSPP) shows a compositional bias: pro residues. The HMA domain maps to 249-315 (DQVVVLRVSL…KVKNAQFWPE (67 aa)). Zn(2+) is bound by residues C260 and C263.

As to quaternary structure, interacts with FT, but not with TSF (TWIN SISTER OF FT). As to expression, expressed in vascular tissues of cotyledons, rosette leaves and roots in developing seedlings before and during the floral transition. Expressed specifically in the phloem companion cells. Not detected in embryos or seeds. Not detected in the vegetative shoot apex.

The protein localises to the cytoplasm. It is found in the nucleus. The protein resides in the endoplasmic reticulum. Its function is as follows. Required for root meristem maintenance after germination. Involved in phloem translocation, starch accumulation and flowering. Promotes flowering in the photoperiod pathway. Regulates long-distance movement of FT from leaves to the shoot apex through the phloem stream. In Arabidopsis thaliana (Mouse-ear cress), this protein is Protein SODIUM POTASSIUM ROOT DEFECTIVE 1.